Reading from the N-terminus, the 233-residue chain is UPF0128 protein MJ1463 (233 aa).

This sequence belongs to the UPF0128 family.

The chain is UPF0128 protein MJ1463 from Methanocaldococcus jannaschii (strain ATCC 43067 / DSM 2661 / JAL-1 / JCM 10045 / NBRC 100440) (Methanococcus jannaschii).